Reading from the N-terminus, the 61-residue chain is Short neurotoxin 2 (61 aa).

4 disulfides stabilise this stretch: cysteine 3/cysteine 23, cysteine 17/cysteine 40, cysteine 42/cysteine 53, and cysteine 54/cysteine 59.

It belongs to the three-finger toxin family. Short-chain subfamily. Type I alpha-neurotoxin sub-subfamily. Expressed by the venom gland.

It is found in the secreted. Functionally, binds to muscle nicotinic acetylcholine receptor (nAChR) and inhibit acetylcholine from binding to the receptor, thereby impairing neuromuscular transmission. The protein is Short neurotoxin 2 of Naja nivea (Cape cobra).